A 158-amino-acid chain; its full sequence is Ribosomal RNA large subunit methyltransferase H (158 aa).

S-adenosyl-L-methionine contacts are provided by residues leucine 74, glycine 105, and 124–129; that span reads LGPLTL.

The protein belongs to the RNA methyltransferase RlmH family. As to quaternary structure, homodimer.

The protein resides in the cytoplasm. It catalyses the reaction pseudouridine(1915) in 23S rRNA + S-adenosyl-L-methionine = N(3)-methylpseudouridine(1915) in 23S rRNA + S-adenosyl-L-homocysteine + H(+). In terms of biological role, specifically methylates the pseudouridine at position 1915 (m3Psi1915) in 23S rRNA. This is Ribosomal RNA large subunit methyltransferase H from Xylella fastidiosa (strain Temecula1 / ATCC 700964).